A 177-amino-acid chain; its full sequence is FANCD2 opposite strand protein (177 aa).

The chain is FANCD2 opposite strand protein (FANCD2OS) from Homo sapiens (Human).